The chain runs to 487 residues: Aspyridones efflux protein apdF (487 aa).

Residues 1–21 (MSSVRESSKDESIVHPPKAPE) are compositionally biased toward basic and acidic residues. The disordered stretch occupies residues 1 to 25 (MSSVRESSKDESIVHPPKAPESEPF). A helical transmembrane segment spans residues 35–55 (VALGAGGVLFCTFGYVNAFGV). An N-linked (GlcNAc...) asparagine glycan is attached at N67. 8 helical membrane passes run 75-95 (WIGS…GPLF), 99-119 (GAKV…MTSL), 126-146 (FFLA…APAL), 159-179 (AAMG…PIAL), 191-211 (WAVR…VLGI), 234-254 (VATL…FFYL), 262-282 (GMST…SFFG), and 293-313 (IGPY…TFCW). The N-linked (GlcNAc...) asparagine glycan is linked to N319. The next 3 membrane-spanning stretches (helical) occupy residues 322 to 342 (IIVF…ITPA), 354 to 374 (IGTY…IGPP), and 385 to 405 (GFLQ…VLAF).

This sequence belongs to the major facilitator superfamily. Monocarboxylate porter (TC 2.A.1.13) family.

Its subcellular location is the cell membrane. Efflux pump that may be involved in the secretion of aspyridones. The sequence is that of Aspyridones efflux protein apdF from Emericella nidulans (strain FGSC A4 / ATCC 38163 / CBS 112.46 / NRRL 194 / M139) (Aspergillus nidulans).